A 957-amino-acid chain; its full sequence is Glycine dehydrogenase (decarboxylating) (957 aa).

Position 708 is an N6-(pyridoxal phosphate)lysine (Lys-708).

It belongs to the GcvP family. As to quaternary structure, the glycine cleavage system is composed of four proteins: P, T, L and H. It depends on pyridoxal 5'-phosphate as a cofactor.

It carries out the reaction N(6)-[(R)-lipoyl]-L-lysyl-[glycine-cleavage complex H protein] + glycine + H(+) = N(6)-[(R)-S(8)-aminomethyldihydrolipoyl]-L-lysyl-[glycine-cleavage complex H protein] + CO2. In terms of biological role, the glycine cleavage system catalyzes the degradation of glycine. The P protein binds the alpha-amino group of glycine through its pyridoxal phosphate cofactor; CO(2) is released and the remaining methylamine moiety is then transferred to the lipoamide cofactor of the H protein. In Salmonella dublin (strain CT_02021853), this protein is Glycine dehydrogenase (decarboxylating).